The following is a 252-amino-acid chain: dITP/XTP pyrophosphatase (252 aa).

7 to 12 (THNEGK) provides a ligand contact to substrate. Catalysis depends on Asp74, which acts as the Proton acceptor. Asp74 contributes to the Mg(2+) binding site. Substrate is bound by residues Ser75 and 193-196 (FGYD). The tract at residues 201 to 224 (PDDQPAGRVSTEPDHEGEPLTSAE) is disordered. Substrate is bound by residues Lys230 and 235–236 (HR).

It belongs to the HAM1 NTPase family. In terms of assembly, homodimer. The cofactor is Mg(2+).

It catalyses the reaction XTP + H2O = XMP + diphosphate + H(+). The enzyme catalyses dITP + H2O = dIMP + diphosphate + H(+). It carries out the reaction ITP + H2O = IMP + diphosphate + H(+). Its function is as follows. Pyrophosphatase that catalyzes the hydrolysis of nucleoside triphosphates to their monophosphate derivatives, with a high preference for the non-canonical purine nucleotides XTP (xanthosine triphosphate), dITP (deoxyinosine triphosphate) and ITP. Seems to function as a house-cleaning enzyme that removes non-canonical purine nucleotides from the nucleotide pool, thus preventing their incorporation into DNA/RNA and avoiding chromosomal lesions. The chain is dITP/XTP pyrophosphatase from Bifidobacterium longum subsp. infantis (strain ATCC 15697 / DSM 20088 / JCM 1222 / NCTC 11817 / S12).